A 413-amino-acid chain; its full sequence is GTPase HflX (413 aa).

In terms of domain architecture, Hflx-type G spans 200–386 (VRVALVGYTN…KVYETVREIH (187 aa)). Residues 206 to 213 (GYTNVGKS), 231 to 235 (FATLD), 252 to 255 (DTVG), 318 to 321 (NKID), and 364 to 366 (SAT) contribute to the GTP site. Positions 213 and 233 each coordinate Mg(2+).

It belongs to the TRAFAC class OBG-HflX-like GTPase superfamily. HflX GTPase family. Monomer. Associates with the 50S ribosomal subunit. Mg(2+) serves as cofactor.

It is found in the cytoplasm. Its function is as follows. GTPase that associates with the 50S ribosomal subunit and may have a role during protein synthesis or ribosome biogenesis. The protein is GTPase HflX of Flavobacterium psychrophilum (strain ATCC 49511 / DSM 21280 / CIP 103535 / JIP02/86).